Reading from the N-terminus, the 730-residue chain is Catalase-peroxidase (730 aa).

Residues 92 to 225 (WHSAGTYRSI…LSAVHMGLIY (134 aa)) constitute a cross-link (tryptophyl-tyrosyl-methioninium (Trp-Tyr) (with M-251)). H93 acts as the Proton acceptor in catalysis. A cross-link (tryptophyl-tyrosyl-methioninium (Tyr-Met) (with W-92)) is located at residues 225 to 251 (YVNPEGPDGIPDPVASARDIRTTFRRM). H266 is a heme b binding site.

Belongs to the peroxidase family. Peroxidase/catalase subfamily. In terms of assembly, homodimer or homotetramer. The cofactor is heme b. Formation of the three residue Trp-Tyr-Met cross-link is important for the catalase, but not the peroxidase activity of the enzyme.

Its subcellular location is the cytoplasm. It carries out the reaction H2O2 + AH2 = A + 2 H2O. The enzyme catalyses 2 H2O2 = O2 + 2 H2O. In terms of biological role, bifunctional enzyme with both catalase and broad-spectrum peroxidase activity. This Blumeria hordei (Barley powdery mildew) protein is Catalase-peroxidase.